A 203-amino-acid polypeptide reads, in one-letter code: ATP-dependent Clp protease proteolytic subunit (203 aa).

The active-site Nucleophile is S100. The active site involves H125.

It belongs to the peptidase S14 family. In terms of assembly, component of the chloroplastic Clp protease core complex.

The protein localises to the plastid. The protein resides in the chloroplast stroma. It carries out the reaction Hydrolysis of proteins to small peptides in the presence of ATP and magnesium. alpha-casein is the usual test substrate. In the absence of ATP, only oligopeptides shorter than five residues are hydrolyzed (such as succinyl-Leu-Tyr-|-NHMec, and Leu-Tyr-Leu-|-Tyr-Trp, in which cleavage of the -Tyr-|-Leu- and -Tyr-|-Trp bonds also occurs).. In terms of biological role, cleaves peptides in various proteins in a process that requires ATP hydrolysis. Has a chymotrypsin-like activity. Plays a major role in the degradation of misfolded proteins. This is ATP-dependent Clp protease proteolytic subunit from Dioscorea elephantipes (Elephant's foot yam).